A 433-amino-acid polypeptide reads, in one-letter code: 3-phosphoshikimate 1-carboxyvinyltransferase (433 aa).

Residues K23, S24, and R28 each coordinate 3-phosphoshikimate. Position 23 (K23) interacts with phosphoenolpyruvate. The phosphoenolpyruvate site is built by G95 and R123. 6 residues coordinate 3-phosphoshikimate: S170, S171, Q172, S198, D317, and K344. A phosphoenolpyruvate-binding site is contributed by Q172. The active-site Proton acceptor is D317. 3 residues coordinate phosphoenolpyruvate: R348, R391, and K416.

Belongs to the EPSP synthase family. In terms of assembly, monomer.

Its subcellular location is the cytoplasm. The enzyme catalyses 3-phosphoshikimate + phosphoenolpyruvate = 5-O-(1-carboxyvinyl)-3-phosphoshikimate + phosphate. Its pathway is metabolic intermediate biosynthesis; chorismate biosynthesis; chorismate from D-erythrose 4-phosphate and phosphoenolpyruvate: step 6/7. Catalyzes the transfer of the enolpyruvyl moiety of phosphoenolpyruvate (PEP) to the 5-hydroxyl of shikimate-3-phosphate (S3P) to produce enolpyruvyl shikimate-3-phosphate and inorganic phosphate. The polypeptide is 3-phosphoshikimate 1-carboxyvinyltransferase (Neisseria gonorrhoeae (strain NCCP11945)).